The primary structure comprises 120 residues: Large ribosomal subunit protein uL18 (120 aa).

The segment at 1 to 24 is disordered; sequence MITKAAKNATRKKRHARVRAKLTG. Residues 9–20 are compositionally biased toward basic residues; that stretch reads ATRKKRHARVRA.

Belongs to the universal ribosomal protein uL18 family. In terms of assembly, part of the 50S ribosomal subunit; part of the 5S rRNA/L5/L18/L25 subcomplex. Contacts the 5S and 23S rRNAs.

Functionally, this is one of the proteins that bind and probably mediate the attachment of the 5S RNA into the large ribosomal subunit, where it forms part of the central protuberance. The polypeptide is Large ribosomal subunit protein uL18 (Bacillus mycoides (strain KBAB4) (Bacillus weihenstephanensis)).